Here is a 73-residue protein sequence, read N- to C-terminus: U3-agatoxin-Ao1k (73 aa).

Positions 1 to 20 (MRTIISLLLLSAMVFAVIEA) are cleaved as a signal peptide. Positions 21 to 34 (ISLEEGLQLFEGER) are excised as a propeptide. 4 disulfides stabilise this stretch: cysteine 36–cysteine 52, cysteine 43–cysteine 57, cysteine 51–cysteine 67, and cysteine 59–cysteine 65. Serine 71 carries the serine amide modification.

It belongs to the neurotoxin 07 (Beta/delta-agtx) family. 03 (aga-4) subfamily. Aga sub-subfamily. In terms of tissue distribution, expressed by the venom gland.

The protein resides in the secreted. Insecticidal neurotoxin that modulates the insect Nav channel (DmNaV1/tipE (para/tipE)) in a unique manner, with both the activation and inactivation processes being affected. The voltage dependence of activation is shifted toward more hyperpolarized potentials (analogous to site 4 toxins) and a non-inactivating persistent sodium current is induced (site 3-like action). Interestingly, both effects take place in a voltage-dependent manner, producing a bell-shaped curve between -80 and 0 mV. Compared to beta/delta-agatoxin-1 to -3, this toxin appears to affect the insect sodium channel only weakly. The protein is U3-agatoxin-Ao1k of Agelena orientalis (Funnel-web spider).